Reading from the N-terminus, the 68-residue chain is Sec-independent protein translocase protein TatA (68 aa).

Residues 1 to 21 (MGSLSIWHWLIVLLIVVLVFG) traverse the membrane as a helical segment. The disordered stretch occupies residues 42–68 (GMNEGAKDGQPPAKDAGRIIDGEADKK). Residues 56 to 68 (DAGRIIDGEADKK) show a composition bias toward basic and acidic residues.

It belongs to the TatA/E family. In terms of assembly, the Tat system comprises two distinct complexes: a TatABC complex, containing multiple copies of TatA, TatB and TatC subunits, and a separate TatA complex, containing only TatA subunits. Substrates initially bind to the TatABC complex, which probably triggers association of the separate TatA complex to form the active translocon.

It localises to the cell inner membrane. Functionally, part of the twin-arginine translocation (Tat) system that transports large folded proteins containing a characteristic twin-arginine motif in their signal peptide across membranes. TatA could form the protein-conducting channel of the Tat system. This chain is Sec-independent protein translocase protein TatA, found in Chromobacterium violaceum (strain ATCC 12472 / DSM 30191 / JCM 1249 / CCUG 213 / NBRC 12614 / NCIMB 9131 / NCTC 9757 / MK).